A 251-amino-acid polypeptide reads, in one-letter code: Methionine aminopeptidase (251 aa).

Histidine 76 contributes to the substrate binding site. A divalent metal cation-binding residues include aspartate 93, aspartate 104, and histidine 168. Histidine 175 is a substrate binding site. A divalent metal cation is bound by residues glutamate 202 and glutamate 233.

The protein belongs to the peptidase M24A family. Methionine aminopeptidase type 1 subfamily. Monomer. Requires Co(2+) as cofactor. It depends on Zn(2+) as a cofactor. The cofactor is Mn(2+). Fe(2+) is required as a cofactor.

The catalysed reaction is Release of N-terminal amino acids, preferentially methionine, from peptides and arylamides.. Functionally, removes the N-terminal methionine from nascent proteins. The N-terminal methionine is often cleaved when the second residue in the primary sequence is small and uncharged (Met-Ala-, Cys, Gly, Pro, Ser, Thr, or Val). Requires deformylation of the N(alpha)-formylated initiator methionine before it can be hydrolyzed. The chain is Methionine aminopeptidase from Staphylococcus epidermidis (strain ATCC 35984 / DSM 28319 / BCRC 17069 / CCUG 31568 / BM 3577 / RP62A).